The sequence spans 372 residues: Probable E3 ubiquitin-protein ligase makorin-1 (372 aa).

C3H1-type zinc fingers lie at residues 20-45 and 48-75; these read KHVT…HDLT and KPAA…HCKP. Residues 78 to 110 are disordered; sequence NEEFSSPQMLPPSSPSPSTDPESSQPAPRPKTQ. Over residues 93 to 103 the composition is skewed to low complexity; it reads SPSTDPESSQP. A C3H1-type 3 zinc finger spans residues 153 to 180; sequence ALRKQLCPYAAVGECRYGINCAYLHGDV. Residues 181–208 are makorin-type Cys-His; sequence CDMCGLQVLHPTDNSQRSQHTKACIEAH. An RING-type zinc finger spans residues 226 to 280; sequence CGVCMEVVFEKANPSERRFGILSNCNHCYCLKCIRKWRSAKQFESKIIKSCPECR. The C3H1-type 4 zinc-finger motif lies at 309-338; the sequence is GMGRKPCRYFDEGRGICPFGANCFYKHAFP.

It catalyses the reaction S-ubiquitinyl-[E2 ubiquitin-conjugating enzyme]-L-cysteine + [acceptor protein]-L-lysine = [E2 ubiquitin-conjugating enzyme]-L-cysteine + N(6)-ubiquitinyl-[acceptor protein]-L-lysine.. It functions in the pathway protein modification; protein ubiquitination. Functionally, E3 ubiquitin ligase catalyzing the covalent attachment of ubiquitin moieties onto substrate proteins. This chain is Probable E3 ubiquitin-protein ligase makorin-1, found in Tetraodon nigroviridis (Spotted green pufferfish).